A 326-amino-acid chain; its full sequence is tRNA-dihydrouridine(20a/20b) synthase [NAD(P)+] (326 aa).

Residues 26–28 and glutamine 79 each bind FMN; that span reads PMV. Cysteine 108 serves as the catalytic Proton donor. FMN-binding positions include lysine 149, histidine 177, 208–210, and 232–233; these read NGD and AR.

This sequence belongs to the Dus family. Dus4 subfamily. FMN serves as cofactor.

The protein resides in the mitochondrion. It catalyses the reaction 5,6-dihydrouridine(20a) in tRNA + NADP(+) = uridine(20a) in tRNA + NADPH + H(+). The catalysed reaction is 5,6-dihydrouridine(20a) in tRNA + NAD(+) = uridine(20a) in tRNA + NADH + H(+). The enzyme catalyses 5,6-dihydrouridine(20b) in tRNA + NAD(+) = uridine(20b) in tRNA + NADH + H(+). It carries out the reaction 5,6-dihydrouridine(20b) in tRNA + NADP(+) = uridine(20b) in tRNA + NADPH + H(+). It catalyses the reaction a 5,6-dihydrouridine in mRNA + NAD(+) = a uridine in mRNA + NADH + H(+). The catalysed reaction is a 5,6-dihydrouridine in mRNA + NADP(+) = a uridine in mRNA + NADPH + H(+). Functionally, catalyzes the synthesis of dihydrouridine, a modified base found in the D-loop of most tRNAs. Also able to mediate dihydrouridylation of some mRNAs, thereby affecting their translation. The sequence is that of tRNA-dihydrouridine(20a/20b) synthase [NAD(P)+] from Schizosaccharomyces pombe (strain 972 / ATCC 24843) (Fission yeast).